A 139-amino-acid chain; its full sequence is Aspartate 1-decarboxylase (139 aa).

Ser25 serves as the catalytic Schiff-base intermediate with substrate; via pyruvic acid. Residue Ser25 is modified to Pyruvic acid (Ser). Thr57 is a substrate binding site. Tyr58 acts as the Proton donor in catalysis. Position 73–75 (73–75) interacts with substrate; that stretch reads GAA. A disordered region spans residues 116-139; it reads ELGEDPAHAPAGSGLKDPRHPEGE.

It belongs to the PanD family. As to quaternary structure, heterooctamer of four alpha and four beta subunits. Pyruvate is required as a cofactor. Is synthesized initially as an inactive proenzyme, which is activated by self-cleavage at a specific serine bond to produce a beta-subunit with a hydroxyl group at its C-terminus and an alpha-subunit with a pyruvoyl group at its N-terminus.

Its subcellular location is the cytoplasm. It catalyses the reaction L-aspartate + H(+) = beta-alanine + CO2. The protein operates within cofactor biosynthesis; (R)-pantothenate biosynthesis; beta-alanine from L-aspartate: step 1/1. In terms of biological role, catalyzes the pyruvoyl-dependent decarboxylation of aspartate to produce beta-alanine. This Corynebacterium urealyticum (strain ATCC 43042 / DSM 7109) protein is Aspartate 1-decarboxylase.